Here is a 337-residue protein sequence, read N- to C-terminus: Glyceraldehyde-3-phosphate dehydrogenase, cytosolic (337 aa).

Residues 13–14 (RI), aspartate 35, and arginine 82 contribute to the NAD(+) site. Residues 153 to 155 (SCT), threonine 184, 213 to 214 (TG), and arginine 236 each bind D-glyceraldehyde 3-phosphate. Catalysis depends on cysteine 154, which acts as the Nucleophile. Asparagine 318 contacts NAD(+).

Belongs to the glyceraldehyde-3-phosphate dehydrogenase family. In terms of assembly, homotetramer.

It localises to the cytoplasm. The enzyme catalyses D-glyceraldehyde 3-phosphate + phosphate + NAD(+) = (2R)-3-phospho-glyceroyl phosphate + NADH + H(+). The protein operates within carbohydrate degradation; glycolysis; pyruvate from D-glyceraldehyde 3-phosphate: step 1/5. In terms of biological role, key enzyme in glycolysis that catalyzes the first step of the pathway by converting D-glyceraldehyde 3-phosphate (G3P) into 3-phospho-D-glyceroyl phosphate. Essential for the maintenance of cellular ATP levels and carbohydrate metabolism. The polypeptide is Glyceraldehyde-3-phosphate dehydrogenase, cytosolic (GAPC) (Antirrhinum majus (Garden snapdragon)).